Reading from the N-terminus, the 313-residue chain is Arabinooligosaccharides transport system permease protein AraP (313 aa).

The next 6 helical transmembrane spans lie at 39–59 (FVLS…IMSF), 91–111 (LEYT…LAIF), 126–146 (ALFI…RLIF), 176–196 (MFLM…LYFL), 224–244 (ITLP…IIGG), and 281–301 (MGYG…VSLI). In terms of domain architecture, ABC transmembrane type-1 spans 87 to 302 (LWNTLEYTFW…IVILVVSLIS (216 aa)).

Belongs to the binding-protein-dependent transport system permease family. MalFG subfamily. The complex is composed of two ATP-binding proteins (MsmX), two transmembrane proteins (AraP and AraQ) and a solute-binding protein (AraN).

It is found in the cell membrane. Functionally, part of the ABC transporter complex AraNPQ involved in the uptake of arabinooligosaccharides. Transports alpha-1,5-arabinooligosaccharides, at least up to four L-arabinosyl units. Responsible for the translocation of the substrate across the membrane. The sequence is that of Arabinooligosaccharides transport system permease protein AraP from Bacillus subtilis (strain 168).